Here is a 249-residue protein sequence, read N- to C-terminus: MDFLVAVKKTVELRLSTEPSPPQRTAPLVDFTKAVGDFGIIAEYKRASPRGVVRLDLPPWAYFAELHSYASAFSVLTEPFWFLGDYRFIPIAKAFKPVLMKDFVIDRRQIEAAYGYGADAVLIIYRLVEREKAMELAEYAQRLGLTPLVEVDNAQDAREVATWGGRVVIGINARDLRTLETNLTRAFDIAKSLRGDVDYIIESGISRPEEVEKACLLYARGVLVGTSLMKNPALAKELKAAAERCLARR.

This sequence belongs to the TrpC family.

The catalysed reaction is 1-(2-carboxyphenylamino)-1-deoxy-D-ribulose 5-phosphate + H(+) = (1S,2R)-1-C-(indol-3-yl)glycerol 3-phosphate + CO2 + H2O. It participates in amino-acid biosynthesis; L-tryptophan biosynthesis; L-tryptophan from chorismate: step 4/5. This Pyrobaculum neutrophilum (strain DSM 2338 / JCM 9278 / NBRC 100436 / V24Sta) (Thermoproteus neutrophilus) protein is Indole-3-glycerol phosphate synthase.